A 352-amino-acid polypeptide reads, in one-letter code: NADP-dependent isopropanol dehydrogenase (352 aa).

Zn(2+) is bound by residues cysteine 37, histidine 59, and aspartate 150. NADP(+) is bound by residues 175 to 178, 198 to 200, tyrosine 218, 265 to 267, and lysine 340; these read IGPV, GSR, and VNY.

This sequence belongs to the zinc-containing alcohol dehydrogenase family. Homotetramer. Requires Zn(2+) as cofactor.

The catalysed reaction is propan-2-ol + NADP(+) = acetone + NADPH + H(+). Alcohol dehydrogenase with a preference for medium chain secondary alcohols, such as 2-butanol and isopropanol. Has very low activity with primary alcohols, such as ethanol. Under physiological conditions, the enzyme reduces aldehydes and 2-ketones to produce secondary alcohols. Is also active with acetaldehyde and propionaldehyde. The chain is NADP-dependent isopropanol dehydrogenase (adh) from Thermoanaerobacter brockii (Thermoanaerobium brockii).